The following is a 487-amino-acid chain: Lysine--tRNA ligase (487 aa).

Mg(2+)-binding residues include glutamate 398 and glutamate 405.

The protein belongs to the class-II aminoacyl-tRNA synthetase family. In terms of assembly, homodimer. The cofactor is Mg(2+).

It is found in the cytoplasm. It catalyses the reaction tRNA(Lys) + L-lysine + ATP = L-lysyl-tRNA(Lys) + AMP + diphosphate. The polypeptide is Lysine--tRNA ligase (Mycoplasma mobile (strain ATCC 43663 / 163K / NCTC 11711) (Mesomycoplasma mobile)).